The sequence spans 320 residues: Ferrochelatase (320 aa).

2 residues coordinate Fe cation: His-194 and Glu-275.

The protein belongs to the ferrochelatase family. In terms of assembly, monomer.

Its subcellular location is the cytoplasm. The enzyme catalyses heme b + 2 H(+) = protoporphyrin IX + Fe(2+). It participates in porphyrin-containing compound metabolism; protoheme biosynthesis; protoheme from protoporphyrin-IX: step 1/1. In terms of biological role, catalyzes the ferrous insertion into protoporphyrin IX. The polypeptide is Ferrochelatase (Escherichia coli O139:H28 (strain E24377A / ETEC)).